The following is a 132-amino-acid chain: Small ribosomal subunit protein uS11 (132 aa).

The protein belongs to the universal ribosomal protein uS11 family. As to quaternary structure, part of the 30S ribosomal subunit. Interacts with proteins S7 and S18. Binds to IF-3.

Located on the platform of the 30S subunit, it bridges several disparate RNA helices of the 16S rRNA. Forms part of the Shine-Dalgarno cleft in the 70S ribosome. The sequence is that of Small ribosomal subunit protein uS11 from Clostridioides difficile (strain 630) (Peptoclostridium difficile).